We begin with the raw amino-acid sequence, 508 residues long: Steroid 17-alpha-hydroxylase/17,20 lyase (508 aa).

Heme is bound at residue Cys442.

Belongs to the cytochrome P450 family. Heme is required as a cofactor.

It localises to the endoplasmic reticulum membrane. Its subcellular location is the microsome membrane. The enzyme catalyses a C21-steroid + reduced [NADPH--hemoprotein reductase] + O2 = a 17alpha-hydroxy-C21-steroid + oxidized [NADPH--hemoprotein reductase] + H2O + H(+). The catalysed reaction is progesterone + reduced [NADPH--hemoprotein reductase] + O2 = 17alpha-hydroxyprogesterone + oxidized [NADPH--hemoprotein reductase] + H2O + H(+). It carries out the reaction pregnenolone + reduced [NADPH--hemoprotein reductase] + O2 = 17alpha-hydroxypregnenolone + oxidized [NADPH--hemoprotein reductase] + H2O + H(+). It catalyses the reaction 17alpha-hydroxyprogesterone + reduced [NADPH--hemoprotein reductase] + O2 = androst-4-ene-3,17-dione + acetate + oxidized [NADPH--hemoprotein reductase] + H2O + 2 H(+). The enzyme catalyses 17alpha-hydroxyprogesterone + reduced [NADPH--hemoprotein reductase] + O2 = 16alpha,17alpha-dihydroxyprogesterone + oxidized [NADPH--hemoprotein reductase] + H2O + H(+). The catalysed reaction is 16alpha,17alpha-dihydroxyprogesterone + reduced [NADPH--hemoprotein reductase] + O2 = 6beta,16alpha,17alpha-trihydroxyprogesterone + oxidized [NADPH--hemoprotein reductase] + H2O + H(+). It carries out the reaction 17alpha-hydroxypregnenolone + reduced [NADPH--hemoprotein reductase] + O2 = 3beta-hydroxyandrost-5-en-17-one + acetate + oxidized [NADPH--hemoprotein reductase] + H2O + 2 H(+). It catalyses the reaction 16alpha,17alpha-dihydroxypregnenolone + reduced [NADPH--hemoprotein reductase] + O2 = 3beta,16alpha-dihydroxy-androst-5-en-17-one + acetate + oxidized [NADPH--hemoprotein reductase] + H2O + 2 H(+). The enzyme catalyses 3beta-hydroxyandrost-5-en-17-one + reduced [NADPH--hemoprotein reductase] + O2 = 3beta,16alpha-dihydroxy-androst-5-en-17-one + oxidized [NADPH--hemoprotein reductase] + H2O + H(+). The catalysed reaction is androst-4-ene-3,17-dione + reduced [NADPH--hemoprotein reductase] + O2 = 16alpha-hydroxyandrost-4-ene-3,17-dione + oxidized [NADPH--hemoprotein reductase] + H2O + H(+). The protein operates within steroid hormone biosynthesis. It functions in the pathway steroid biosynthesis; glucocorticoid biosynthesis. Regulated predominantly by intracellular cAMP levels. The 17,20-lyase activity is stimulated by cytochrome b5, which acts as an allosteric effector increasing the Vmax of the lyase activity. Its function is as follows. A cytochrome P450 monooxygenase involved in corticoid and androgen biosynthesis. Catalyzes 17-alpha hydroxylation of C21 steroids, which is common for both pathways. A second oxidative step, required only for androgen synthesis, involves an acyl-carbon cleavage. The 17-alpha hydroxy intermediates, as part of adrenal glucocorticoids biosynthesis pathway, are precursors of cortisol. Hydroxylates steroid hormones, pregnenolone and progesterone to form 17-alpha hydroxy metabolites, followed by the cleavage of the C17-C20 bond to form C19 steroids, dehydroepiandrosterone (DHEA) and androstenedione. Has 16-alpha hydroxylase activity. Catalyzes 16-alpha hydroxylation of 17-alpha hydroxy pregnenolone, followed by the cleavage of the C17-C20 bond to form 16-alpha-hydroxy DHEA. Also 16-alpha hydroxylates androgens, relevant for estriol synthesis. Mechanistically, uses molecular oxygen inserting one oxygen atom into a substrate, and reducing the second into a water molecule, with two electrons provided by NADPH via cytochrome P450 reductase (CPR; NADPH-ferrihemoprotein reductase). This Cavia porcellus (Guinea pig) protein is Steroid 17-alpha-hydroxylase/17,20 lyase (CYP17A1).